The primary structure comprises 451 residues: UDP-glycosyltransferase 76E11 (451 aa).

Residues S273, 332–334 (APQ), 349–357 (HCGWNSTLE), and 371–374 (SSDQ) each bind UDP-alpha-D-glucose.

Belongs to the UDP-glycosyltransferase family.

Possesses low quercetin 3-O-glucosyltransferase and 7-O-glucosyltransferase activities in vitro. This Arabidopsis thaliana (Mouse-ear cress) protein is UDP-glycosyltransferase 76E11 (UGT76E11).